Reading from the N-terminus, the 471-residue chain is MQPGVLAACLLLSWTHCWSLPLLNSNEDDDLSEEDFQFAESYLRSYYHPLNPAGILKKNAAGSMVDRLREMQSFFGLEVTGKLDDNTLAIMKQPRCGVPDVGEYNVFPRTLKWSQTNLTYRIVNYTPDLTHSEVEKAFKKAFKVWSDVTPLNFTRIHNGTADIMISFGTKEHGDFYPFDGPSGLLAHAFPPGPNYGGDAHFDDDETWTSSSKGYNLFLVAAHEFGHSLGLDHSKDPGALMFPIYTYTGKSHFMLPDDDVQGIQSLYGPGDEDPNPKHPKTPDKCDPSLSLDAITSLRGETMIFKDRFFWRLHPQQVDAELFLTKSFWPELPNRIDAAYEHPARDLIFIFRGKKFWAPNGYDILEGYPQKLSELGFPREVKKISAAVHFEDTGKTLFFSGNQVWSYDDTNHTMDQDYPRLIEEEFPGIGGKVDAVYEKNGYIYFFNGPIQFEYSIWSKRIVRVMPTNSLLWC.

A signal peptide spans 1 to 19 (MQPGVLAACLLLSWTHCWS). Positions 20 to 103 (LPLLNSNEDD…PRCGVPDVGE (84 aa)) are cleaved as a propeptide — activation peptide. Residues 94-101 (PRCGVPDV) carry the Cysteine switch motif. Cysteine 96 provides a ligand contact to Zn(2+). N-linked (GlcNAc...) asparagine glycosylation is present at asparagine 117. Aspartate 128 is a Ca(2+) binding site. 2 N-linked (GlcNAc...) asparagine glycosylation sites follow: asparagine 152 and asparagine 158. Aspartate 162 serves as a coordination point for Ca(2+). Histidine 172 and aspartate 174 together coordinate Zn(2+). Residues 176–246 (YPFDGPSGLL…GALMFPIYTY (71 aa)) form an interaction with TIMP2 region. Aspartate 179, glycine 180, serine 182, and leucine 184 together coordinate Ca(2+). Position 187 (histidine 187) interacts with Zn(2+). The Ca(2+) site is built by asparagine 194, glycine 196, and aspartate 198. Residue histidine 200 coordinates Zn(2+). 3 residues coordinate Ca(2+): aspartate 202, aspartate 203, and glutamate 205. Histidine 222 is a Zn(2+) binding site. Residue glutamate 223 is part of the active site. Residues histidine 226, histidine 232, and methionine 240 each contribute to the Zn(2+) site. The tract at residues 263-284 (QSLYGPGDEDPNPKHPKTPDKC) is disordered. An interaction with collagen region spans residues 268–471 (PGDEDPNPKH…VMPTNSLLWC (204 aa)). A compositionally biased stretch (basic and acidic residues) spans 273–284 (PNPKHPKTPDKC). 4 Hemopexin repeats span residues 281-330 (PDKC…WPEL), 331-377 (PNRI…GFPR), 379-427 (VKKI…FPGI), and 428-471 (GGKV…LLWC). Residues cysteine 284 and cysteine 471 are joined by a disulfide bond. 4 residues coordinate Ca(2+): aspartate 291, isoleucine 293, aspartate 335, and alanine 337. Tyrosine 366 bears the Phosphotyrosine; by PKDCC mark. The Ca(2+) site is built by serine 383 and alanine 385. N-linked (GlcNAc...) asparagine glycosylation occurs at asparagine 409. Residues aspartate 432 and valine 434 each contribute to the Ca(2+) site.

This sequence belongs to the peptidase M10A family. Ca(2+) serves as cofactor. Requires Zn(2+) as cofactor. Post-translationally, the proenzyme is activated by removal of the propeptide; this cleavage can be effected by other matrix metalloproteinases, such as MMP2, MMP3 and MMP14 and may involve several cleavage steps. Cleavage can also be autocatalytic, after partial maturation by another protease or after treatment with 4-aminophenylmercuric acetate (APMA) (in vitro). In terms of processing, N-glycosylated. Tyrosine phosphorylated by PKDCC/VLK.

Its subcellular location is the secreted. The protein resides in the extracellular space. The protein localises to the extracellular matrix. In terms of biological role, plays a role in the degradation of extracellular matrix proteins including fibrillar collagen, fibronectin, TNC and ACAN. Cleaves triple helical collagens, including type I, type II and type III collagen, but has the highest activity with soluble type II collagen. Can also degrade collagen type IV, type XIV and type X. May also function by activating or degrading key regulatory proteins, such as TGFB1 and CCN2. Plays a role in wound healing, tissue remodeling, cartilage degradation, bone development, bone mineralization and ossification. Required for normal embryonic bone development and ossification. Plays a role in the healing of bone fractures via endochondral ossification. Plays a role in wound healing, probably by a mechanism that involves proteolytic activation of TGFB1 and degradation of CCN2. Plays a role in keratinocyte migration during wound healing. May play a role in cell migration and in tumor cell invasion. The sequence is that of Collagenase 3 (MMP13) from Oryctolagus cuniculus (Rabbit).